Reading from the N-terminus, the 260-residue chain is Transcription factor BEE 1 (260 aa).

A disordered region spans residues 118 to 139 (ETGSLRRGKRLKKKKEEEDEKE). Residues 151–201 (QATDSHSLAERVRRGKINERLRCLQDMVPGCYKAMGMATMLDEIINYVQSL) enclose the bHLH domain.

It localises to the nucleus. Its function is as follows. Positive regulator of brassinosteroid signaling. In Arabidopsis thaliana (Mouse-ear cress), this protein is Transcription factor BEE 1 (BEE1).